A 453-amino-acid chain; its full sequence is Bifunctional protein GlmU (453 aa).

Residues 1-225 (MNIVILAAGT…EWETLGVNSK (225 aa)) are pyrophosphorylase. UDP-N-acetyl-alpha-D-glucosamine-binding positions include 6 to 9 (LAAG), K20, Q71, 76 to 77 (GT), 98 to 100 (YGD), G135, E150, N165, and N223. D100 serves as a coordination point for Mg(2+). N223 serves as a coordination point for Mg(2+). Positions 226 to 246 (AQLAELERIHQRTIADALLVD) are linker. Residues 247 to 453 (GVTLADPARV…GYVRPVKKKS (207 aa)) are N-acetyltransferase. Positions 329 and 347 each coordinate UDP-N-acetyl-alpha-D-glucosamine. The active-site Proton acceptor is H359. UDP-N-acetyl-alpha-D-glucosamine contacts are provided by Y362 and N373. Acetyl-CoA is bound by residues A376, 382–383 (NY), S401, and A419.

This sequence in the N-terminal section; belongs to the N-acetylglucosamine-1-phosphate uridyltransferase family. The protein in the C-terminal section; belongs to the transferase hexapeptide repeat family. As to quaternary structure, homotrimer. It depends on Mg(2+) as a cofactor.

The protein resides in the cytoplasm. It catalyses the reaction alpha-D-glucosamine 1-phosphate + acetyl-CoA = N-acetyl-alpha-D-glucosamine 1-phosphate + CoA + H(+). The enzyme catalyses N-acetyl-alpha-D-glucosamine 1-phosphate + UTP + H(+) = UDP-N-acetyl-alpha-D-glucosamine + diphosphate. Its pathway is nucleotide-sugar biosynthesis; UDP-N-acetyl-alpha-D-glucosamine biosynthesis; N-acetyl-alpha-D-glucosamine 1-phosphate from alpha-D-glucosamine 6-phosphate (route II): step 2/2. The protein operates within nucleotide-sugar biosynthesis; UDP-N-acetyl-alpha-D-glucosamine biosynthesis; UDP-N-acetyl-alpha-D-glucosamine from N-acetyl-alpha-D-glucosamine 1-phosphate: step 1/1. It participates in bacterial outer membrane biogenesis; LPS lipid A biosynthesis. In terms of biological role, catalyzes the last two sequential reactions in the de novo biosynthetic pathway for UDP-N-acetylglucosamine (UDP-GlcNAc). The C-terminal domain catalyzes the transfer of acetyl group from acetyl coenzyme A to glucosamine-1-phosphate (GlcN-1-P) to produce N-acetylglucosamine-1-phosphate (GlcNAc-1-P), which is converted into UDP-GlcNAc by the transfer of uridine 5-monophosphate (from uridine 5-triphosphate), a reaction catalyzed by the N-terminal domain. The chain is Bifunctional protein GlmU from Burkholderia ambifaria (strain MC40-6).